Here is a 214-residue protein sequence, read N- to C-terminus: Protein-L-isoaspartate O-methyltransferase (214 aa).

Residue Ser-63 is part of the active site.

It belongs to the methyltransferase superfamily. L-isoaspartyl/D-aspartyl protein methyltransferase family.

The protein localises to the cytoplasm. The enzyme catalyses [protein]-L-isoaspartate + S-adenosyl-L-methionine = [protein]-L-isoaspartate alpha-methyl ester + S-adenosyl-L-homocysteine. Its function is as follows. Catalyzes the methyl esterification of L-isoaspartyl residues in peptides and proteins that result from spontaneous decomposition of normal L-aspartyl and L-asparaginyl residues. It plays a role in the repair and/or degradation of damaged proteins. This is Protein-L-isoaspartate O-methyltransferase from Desulfotalea psychrophila (strain LSv54 / DSM 12343).